A 537-amino-acid polypeptide reads, in one-letter code: DNA-directed primase/polymerase protein (537 aa).

A coiled-coil region spans residues 1-22 (MLRKWEARVKQIEERASHYERK). Substrate-binding positions include Arg-76, 114 to 116 (DLE), 165 to 169 (KFSRH), 270 to 273 (RNFR), and Lys-279. Residues Asp-114 and Glu-116 each coordinate Mn(2+). Residues Cys-401, His-408, Cys-428, and Cys-433 each contribute to the Zn(2+) site. The Zinc knuckle motif signature appears at 401 to 434 (CENIGRAHKSNNIMILVDLKNEVWYQKCHDPVCK). Positions 462-481 (SGETDDTSTSLTKDSQTPPS) are disordered. Positions 462 to 536 (SGETDDTSTS…DELIIEALQN (75 aa)) are interaction with RPA1. The segment covering 468–478 (TSTSLTKDSQT) has biased composition (low complexity). 2 short sequence motifs (RPA1-binding motif) span residues 494 to 507 (WDDEDDALFLEATE) and 524 to 532 (DIPDELIIE).

It belongs to the eukaryotic-type primase small subunit family. Interacts with RPA1; leading to recruitment to chromatin and stimulate DNA primase activity. Interacts with SSBP1. Interacts with POLDIP2; leading to enhance DNA polymerase activity. The cofactor is Mn(2+).

The protein localises to the nucleus. Its subcellular location is the mitochondrion matrix. The protein resides in the chromosome. It catalyses the reaction ssDNA + n NTP = ssDNA/pppN(pN)n-1 hybrid + (n-1) diphosphate.. The catalysed reaction is DNA(n) + a 2'-deoxyribonucleoside 5'-triphosphate = DNA(n+1) + diphosphate. Its function is as follows. DNA primase and DNA polymerase required to tolerate replication-stalling lesions by bypassing them. Required to facilitate mitochondrial and nuclear replication fork progression by initiating de novo DNA synthesis using dNTPs and acting as an error-prone DNA polymerase able to bypass certain DNA lesions. Shows a high capacity to tolerate DNA damage lesions such as 8oxoG and abasic sites in DNA. Provides different translesion synthesis alternatives when DNA replication is stalled: able to synthesize DNA primers downstream of lesions, such as ultraviolet (UV) lesions, R-loops and G-quadruplexes, to allow DNA replication to continue. Can also realign primers ahead of 'unreadable lesions' such as abasic sites and 6-4 photoproduct (6-4 pyrimidine-pyrimidinone), thereby skipping the lesion. Repriming avoids fork degradation while leading to accumulation of internal ssDNA gaps behind the forks. Also able to incorporate nucleotides opposite DNA lesions such as 8oxoG, like a regular translesion synthesis DNA polymerase. Also required for reinitiating stalled forks after UV damage during nuclear DNA replication. Required for mitochondrial DNA (mtDNA) synthesis and replication, by reinitiating synthesis after UV damage or in the presence of chain-terminating nucleotides. Prevents APOBEC family-mediated DNA mutagenesis by repriming downstream of abasic site to prohibit error-prone translesion synthesis. Has non-overlapping function with POLH. In addition to its role in DNA damage response, also required to maintain efficient nuclear and mitochondrial DNA replication in unperturbed cells. This chain is DNA-directed primase/polymerase protein, found in Mus musculus (Mouse).